Reading from the N-terminus, the 586-residue chain is Non-structural glycoprotein GNS (586 aa).

Residues 1-14 (MFLQLFNIVLIYGV) form the signal peptide. Topologically, residues 15–544 (RTSQSTWINY…QNKEYWNEES (530 aa)) are extracellular. 8 N-linked (GlcNAc...) asparagine; by host glycosylation sites follow: N27, N68, N274, N350, N383, N476, N501, and N521. A helical transmembrane segment spans residues 545–562 (SIWGISTIITVLGIYYIY). The Cytoplasmic segment spans residues 563-586 (RKNRREKIFLNMKHRVQRFFKLDY).

Belongs to the ephemerovirus glycoprotein family.

The protein resides in the host membrane. This Bos taurus (Bovine) protein is Non-structural glycoprotein GNS (GNS).